The following is a 365-amino-acid chain: MHKSEAPNEPEQLRKLFIGGLSFETTDESLREHFEQWGTLTDCVVMRDPNSKRSRGFGFVTYLSTDEVDAAMTARPHKVDGRVVEPKRAVSREDSSRPGAHLTVKKIFVGGIKEDTEEDHLREYFEQYGKIEVIEIMTDRGSGKKRGFAFVTFEDHDSVDKIVIQKYHTVNNHNSQVRKALSKQEMASVSGSQRERGGSGNYGSRGGFGNDNFGGRGGNFGGNRGGGGGFGNRGYGGDGYNGDGQLWWQPSLLGWNRGYGAGQGGGYGAGQGGGYGGGGQGGGYGGNGGYDGYNGGGSGFSGSGGNFGSSGGYNDFGNYNSQSSSNFGPMKGGNYGGGRNSGPYGGGYGGGSASSSSGYGGGRRF.

Residues 4 to 94 are globular A domain; that stretch reads SEAPNEPEQL…EPKRAVSRED (91 aa). 2 RRM domains span residues 14–97 and 105–184; these read RKLF…DSSR and KKIF…LSKQ. The interval 95 to 185 is globular B domain; it reads SSRPGAHLTV…QVRKALSKQE (91 aa). Disordered stretches follow at residues 175 to 208 and 328 to 365; these read SQVR…RGGF and GPMK…GRRF. 2 stretches are compositionally biased toward gly residues: residues 198 to 208 and 330 to 365; these read GSGNYGSRGGF and MKGG…GRRF. The tract at residues 321-359 is nuclear targeting sequence; it reads SQSSSNFGPMKGGNYGGGRNSGPYGGGYGGGSASSSSGY.

It is found in the nucleus. The protein localises to the cytoplasm. Functionally, this protein is a component of ribonucleosomes. This Xenopus laevis (African clawed frog) protein is Heterogeneous nuclear ribonucleoproteins A1 homolog (hnrnpa1).